The sequence spans 187 residues: Elongation factor P 2 (187 aa).

This sequence belongs to the elongation factor P family.

The protein resides in the cytoplasm. It participates in protein biosynthesis; polypeptide chain elongation. Functionally, involved in peptide bond synthesis. Stimulates efficient translation and peptide-bond synthesis on native or reconstituted 70S ribosomes in vitro. Probably functions indirectly by altering the affinity of the ribosome for aminoacyl-tRNA, thus increasing their reactivity as acceptors for peptidyl transferase. The protein is Elongation factor P 2 of Geobacter sulfurreducens (strain ATCC 51573 / DSM 12127 / PCA).